The chain runs to 94 residues: Large ribosomal subunit protein bL27 (94 aa).

Residues 1 to 9 (MLKMNLQFF) constitute a propeptide that is removed on maturation.

This sequence belongs to the bacterial ribosomal protein bL27 family. In terms of processing, the N-terminus is cleaved by ribosomal processing cysteine protease Prp.

The protein is Large ribosomal subunit protein bL27 of Halalkalibacterium halodurans (strain ATCC BAA-125 / DSM 18197 / FERM 7344 / JCM 9153 / C-125) (Bacillus halodurans).